Consider the following 382-residue polypeptide: Dual-specificity RNA methyltransferase RlmN (382 aa).

The Proton acceptor role is filled by E91. The Radical SAM core domain occupies E97–D339. Cysteines 104 and 344 form a disulfide. Residues C111, C115, and C118 each contribute to the [4Fe-4S] cluster site. S-adenosyl-L-methionine-binding positions include G165–E166, S197, S219–H221, and N301. The active-site S-methylcysteine intermediate is C344.

The protein belongs to the radical SAM superfamily. RlmN family. [4Fe-4S] cluster serves as cofactor.

The protein localises to the cytoplasm. It catalyses the reaction adenosine(2503) in 23S rRNA + 2 reduced [2Fe-2S]-[ferredoxin] + 2 S-adenosyl-L-methionine = 2-methyladenosine(2503) in 23S rRNA + 5'-deoxyadenosine + L-methionine + 2 oxidized [2Fe-2S]-[ferredoxin] + S-adenosyl-L-homocysteine. The catalysed reaction is adenosine(37) in tRNA + 2 reduced [2Fe-2S]-[ferredoxin] + 2 S-adenosyl-L-methionine = 2-methyladenosine(37) in tRNA + 5'-deoxyadenosine + L-methionine + 2 oxidized [2Fe-2S]-[ferredoxin] + S-adenosyl-L-homocysteine. Its function is as follows. Specifically methylates position 2 of adenine 2503 in 23S rRNA and position 2 of adenine 37 in tRNAs. m2A2503 modification seems to play a crucial role in the proofreading step occurring at the peptidyl transferase center and thus would serve to optimize ribosomal fidelity. This Albidiferax ferrireducens (strain ATCC BAA-621 / DSM 15236 / T118) (Rhodoferax ferrireducens) protein is Dual-specificity RNA methyltransferase RlmN.